The chain runs to 831 residues: Phenylalanine--tRNA ligase beta subunit (831 aa).

One can recognise a tRNA-binding domain in the interval 42–157; the sequence is ADISGPIVVG…GFAEPGTKAD (116 aa). Positions 408-483 constitute a B5 domain; that stretch reads VPREPIVVRA…RNEGYENIPA (76 aa). The Mg(2+) site is built by aspartate 461, aspartate 467, glutamate 470, and glutamate 471. Positions 737 to 830 constitute an FDX-ACB domain; it reads STYPVATQDV…AAERTGAVLR (94 aa).

It belongs to the phenylalanyl-tRNA synthetase beta subunit family. Type 1 subfamily. As to quaternary structure, tetramer of two alpha and two beta subunits. Requires Mg(2+) as cofactor.

It is found in the cytoplasm. It catalyses the reaction tRNA(Phe) + L-phenylalanine + ATP = L-phenylalanyl-tRNA(Phe) + AMP + diphosphate + H(+). In Thermobifida fusca (strain YX), this protein is Phenylalanine--tRNA ligase beta subunit.